The primary structure comprises 322 residues: tRNA U34 carboxymethyltransferase (322 aa).

Residues K90, W104, K109, G129, 151 to 153, 180 to 181, M196, Y200, and R315 each bind carboxy-S-adenosyl-L-methionine; these read DPS and IE.

Belongs to the class I-like SAM-binding methyltransferase superfamily. CmoB family. As to quaternary structure, homotetramer.

It carries out the reaction carboxy-S-adenosyl-L-methionine + 5-hydroxyuridine(34) in tRNA = 5-carboxymethoxyuridine(34) in tRNA + S-adenosyl-L-homocysteine + H(+). Its function is as follows. Catalyzes carboxymethyl transfer from carboxy-S-adenosyl-L-methionine (Cx-SAM) to 5-hydroxyuridine (ho5U) to form 5-carboxymethoxyuridine (cmo5U) at position 34 in tRNAs. The sequence is that of tRNA U34 carboxymethyltransferase from Cellvibrio japonicus (strain Ueda107) (Pseudomonas fluorescens subsp. cellulosa).